We begin with the raw amino-acid sequence, 280 residues long: Acetyl-coenzyme A carboxylase carboxyl transferase subunit beta (280 aa).

Residues 28–280 enclose the CoA carboxyltransferase N-terminal domain; it reads IMTKCPSCRT…TLTKLLAMHQ (253 aa). Zn(2+) is bound by residues C32, C35, C51, and C54. The C4-type zinc-finger motif lies at 32–54; that stretch reads CPSCRTIMYTKDLKKNLSVCRTC.

This sequence belongs to the AccD/PCCB family. Acetyl-CoA carboxylase is a heterohexamer composed of biotin carboxyl carrier protein (AccB), biotin carboxylase (AccC) and two subunits each of ACCase subunit alpha (AccA) and ACCase subunit beta (AccD). It depends on Zn(2+) as a cofactor.

Its subcellular location is the cytoplasm. It carries out the reaction N(6)-carboxybiotinyl-L-lysyl-[protein] + acetyl-CoA = N(6)-biotinyl-L-lysyl-[protein] + malonyl-CoA. It functions in the pathway lipid metabolism; malonyl-CoA biosynthesis; malonyl-CoA from acetyl-CoA: step 1/1. In terms of biological role, component of the acetyl coenzyme A carboxylase (ACC) complex. Biotin carboxylase (BC) catalyzes the carboxylation of biotin on its carrier protein (BCCP) and then the CO(2) group is transferred by the transcarboxylase to acetyl-CoA to form malonyl-CoA. The chain is Acetyl-coenzyme A carboxylase carboxyl transferase subunit beta from Shouchella clausii (strain KSM-K16) (Alkalihalobacillus clausii).